Consider the following 491-residue polypeptide: MSDIQAKEDAAPVDRQSSSSVVVPDEPSPLRKMISVASIAAGIQFGWALQLSLLTPYVQLLGVPHKWSSFIWLCGPISGLLVQPTVGYFSDRCKSRFGRRRPFIATGALLVALAVILIGFAADFGHTMGDKLDEAVKIRAVGFFVVGFWILDVANNTLQGPCRAFLGDLAAGDAKKTRTANAIFSFFMAVGNVLGYAAGSYTNLHKIFPFTVTKACDIYCANLKSCFIISITLLIVLTIIALWYVEDKQWSPNADSDNEKTPFFGEIFGAFKVMKRPMWMLLAVTALNWIAWFPFLLYDTDWMGREVYGGDSAGDDKMKKLYNHGIQVGSLGLMLNSIVLGVMSLVIGVISKKIGAKRLWGAVNIILAVCLAMTVLVTKKAEEHRKIAGRMALPTNAIRDGALSLFAILGIPLAITFSIPFALASIISSSSGAGQGLSLGVLNMAIVIPQMIVSFGVGPIDALFGGGNLPGFVVGAIAALISSVVALTVLP.

A compositionally biased stretch (basic and acidic residues) spans 1-12 (MSDIQAKEDAAP). Positions 1–26 (MSDIQAKEDAAPVDRQSSSSVVVPDE) are disordered. Residues 1-33 (MSDIQAKEDAAPVDRQSSSSVVVPDEPSPLRKM) are Cytoplasmic-facing. Residue Ser17 is modified to Phosphoserine. A helical transmembrane segment spans residues 34 to 54 (ISVASIAAGIQFGWALQLSLL). The Extracellular portion of the chain corresponds to 55-68 (TPYVQLLGVPHKWS). Residues 69–89 (SFIWLCGPISGLLVQPTVGYF) form a helical membrane-spanning segment. The Cytoplasmic segment spans residues 90–101 (SDRCKSRFGRRR). Residues 102–122 (PFIATGALLVALAVILIGFAA) form a helical membrane-spanning segment. The Extracellular portion of the chain corresponds to 123–139 (DFGHTMGDKLDEAVKIR). Residues 140 to 160 (AVGFFVVGFWILDVANNTLQG) traverse the membrane as a helical segment. Over 161–181 (PCRAFLGDLAAGDAKKTRTAN) the chain is Cytoplasmic. The chain crosses the membrane as a helical span at residues 182–202 (AIFSFFMAVGNVLGYAAGSYT). The Extracellular portion of the chain corresponds to 203–224 (NLHKIFPFTVTKACDIYCANLK). Residues 225–245 (SCFIISITLLIVLTIIALWYV) traverse the membrane as a helical segment. The Cytoplasmic segment spans residues 246–277 (EDKQWSPNADSDNEKTPFFGEIFGAFKVMKRP). The chain crosses the membrane as a helical span at residues 278-298 (MWMLLAVTALNWIAWFPFLLY). Over 299–329 (DTDWMGREVYGGDSAGDDKMKKLYNHGIQVG) the chain is Extracellular. Residues 330-350 (SLGLMLNSIVLGVMSLVIGVI) traverse the membrane as a helical segment. Topologically, residues 351 to 358 (SKKIGAKR) are cytoplasmic. A helical transmembrane segment spans residues 359–379 (LWGAVNIILAVCLAMTVLVTK). Topologically, residues 380–406 (KAEEHRKIAGRMALPTNAIRDGALSLF) are extracellular. Residues 407–427 (AILGIPLAITFSIPFALASII) form a helical membrane-spanning segment. The Cytoplasmic segment spans residues 428-443 (SSSSGAGQGLSLGVLN). The chain crosses the membrane as a helical span at residues 444 to 464 (MAIVIPQMIVSFGVGPIDALF). Residues 465–468 (GGGN) are Extracellular-facing. Residues 469–489 (LPGFVVGAIAALISSVVALTV) traverse the membrane as a helical segment. Residues 490–491 (LP) are Cytoplasmic-facing.

It belongs to the glycoside-pentoside-hexuronide (GPH) cation symporter transporter (TC 2.A.2.4) family. In terms of tissue distribution, widely expressed.

Its subcellular location is the cell membrane. The catalysed reaction is sucrose(out) + H(+)(out) = sucrose(in) + H(+)(in). It participates in glycan biosynthesis; sucrose metabolism. Its activity is regulated as follows. Inhibited by protonophores (e.g. carbonyl cyanide m-chlorophenyl-hydrazone (CCCP)) and SH group inhibitors (e.g. p-chloromercuribenzene sulphonic acid (PCMBS)). High-affinity sucrose transporter. Responsible for the transport of sucrose into the cell, with the concomitant uptake of protons (symport system). Can also transport a wide range of glucosides, such as helicin, salicin, arbutin, maltose, fraxin, esculin, uranose, alpha-methylglucoside, alpha-phenylglucoside and beta-phenylglucoside. Plays a role in flowering time transition delay. This chain is Sucrose transport protein SUC9, found in Arabidopsis thaliana (Mouse-ear cress).